A 342-amino-acid polypeptide reads, in one-letter code: Succinylglutamate desuccinylase (342 aa).

3 residues coordinate Zn(2+): His63, Glu66, and His155. Residue Glu219 is part of the active site.

The protein belongs to the AspA/AstE family. Succinylglutamate desuccinylase subfamily. The cofactor is Zn(2+).

The catalysed reaction is N-succinyl-L-glutamate + H2O = L-glutamate + succinate. It participates in amino-acid degradation; L-arginine degradation via AST pathway; L-glutamate and succinate from L-arginine: step 5/5. Its function is as follows. Transforms N(2)-succinylglutamate into succinate and glutamate. This is Succinylglutamate desuccinylase from Vibrio cholerae serotype O1 (strain ATCC 39315 / El Tor Inaba N16961).